A 424-amino-acid polypeptide reads, in one-letter code: Calreticulin-3 (424 aa).

The first 28 residues, Met-1 to Ser-28, serve as a signal peptide directing secretion. Asn-97 carries an N-linked (GlcNAc...) asparagine glycan. A disulfide bridge links Cys-114 with Cys-146. An alpha-D-glucoside contacts are provided by Tyr-118, Lys-120, Tyr-137, and Asp-144. 7 repeat units span residues Arg-200–Ile-211, Val-219–Asp-230, Asp-236–Ser-247, Asp-254–Glu-265, Gly-269–Ser-279, Gly-283–Pro-293, and Gly-297–Pro-307. The 4 X approximate repeats stretch occupies residues Arg-200–Glu-265. The span at Trp-228–Pro-237 shows a compositional bias: acidic residues. A disordered region spans residues Trp-228–Lys-275. Residues Asn-238–Pro-260 are compositionally biased toward basic and acidic residues. Residues Gly-269–Pro-307 form a 3 X approximate repeats region. An an alpha-D-glucoside-binding site is contributed by Glu-327. Positions Phe-368–Tyr-401 are enriched in basic and acidic residues. The tract at residues Phe-368–Leu-424 is disordered. Over residues Gly-402–Pro-411 the composition is skewed to basic residues. Positions Asn-412 to Leu-424 are enriched in basic and acidic residues. Positions His-421–Leu-424 match the Prevents secretion from ER motif.

The protein belongs to the calreticulin family.

The protein resides in the endoplasmic reticulum lumen. Molecular calcium-binding chaperone promoting folding, oligomeric assembly and quality control in the ER via the calreticulin/calnexin cycle. This lectin may interact transiently with almost all of the monoglucosylated glycoproteins that are synthesized in the ER. Required for elongation factor Tu receptor (EFR) accumulation and for EFR, but not flagellin-sensing 2 (FLS2) signaling. This Arabidopsis thaliana (Mouse-ear cress) protein is Calreticulin-3 (CRT3).